Reading from the N-terminus, the 713-residue chain is Ribosomal RNA large subunit methyltransferase K/L (713 aa).

A THUMP domain is found at 43 to 154; the sequence is LAYRITLWTR…NGVITIAMNF (112 aa).

It belongs to the methyltransferase superfamily. RlmKL family.

The protein resides in the cytoplasm. It catalyses the reaction guanosine(2445) in 23S rRNA + S-adenosyl-L-methionine = N(2)-methylguanosine(2445) in 23S rRNA + S-adenosyl-L-homocysteine + H(+). It carries out the reaction guanosine(2069) in 23S rRNA + S-adenosyl-L-methionine = N(2)-methylguanosine(2069) in 23S rRNA + S-adenosyl-L-homocysteine + H(+). Its function is as follows. Specifically methylates the guanine in position 2445 (m2G2445) and the guanine in position 2069 (m7G2069) of 23S rRNA. The protein is Ribosomal RNA large subunit methyltransferase K/L of Shewanella sp. (strain ANA-3).